A 352-amino-acid chain; its full sequence is Glycerol-3-phosphate dehydrogenase [NAD(P)+] (352 aa).

Trp-11, Arg-37, and Lys-112 together coordinate NADPH. Sn-glycerol 3-phosphate contacts are provided by Lys-112, Gly-153, and Ser-155. An NADPH-binding site is contributed by Ala-157. Sn-glycerol 3-phosphate is bound by residues Lys-208, Asp-261, Ser-271, Arg-272, and Asn-273. The active-site Proton acceptor is the Lys-208. Residue Arg-272 participates in NADPH binding. The NADPH site is built by Val-296 and Glu-298.

It belongs to the NAD-dependent glycerol-3-phosphate dehydrogenase family.

Its subcellular location is the cytoplasm. The enzyme catalyses sn-glycerol 3-phosphate + NAD(+) = dihydroxyacetone phosphate + NADH + H(+). It catalyses the reaction sn-glycerol 3-phosphate + NADP(+) = dihydroxyacetone phosphate + NADPH + H(+). The protein operates within membrane lipid metabolism; glycerophospholipid metabolism. Functionally, catalyzes the reduction of the glycolytic intermediate dihydroxyacetone phosphate (DHAP) to sn-glycerol 3-phosphate (G3P), the key precursor for phospholipid synthesis. This is Glycerol-3-phosphate dehydrogenase [NAD(P)+] from Polaromonas naphthalenivorans (strain CJ2).